The primary structure comprises 191 residues: MEHNKKELNKAVLLAVIRAAHGIRGDVVVNLLGAEPQRLKTYGVLYDDKGRLYEIVSMRVHKNNVIVRFKGVDDRSTAEALKGVQLYIERDQFADDLDTDEFYQIDLIGLRVYDNTNQLLGEVSGFFNFGAGDLLEVRLISHKTELIPFSKAAVPEICVASGFLVVDPVAAGLFSDPHSFNDLALNDLEKG.

In terms of domain architecture, PRC barrel spans 99-172; sequence TDEFYQIDLI…FLVVDPVAAG (74 aa).

Belongs to the RimM family. In terms of assembly, binds ribosomal protein uS19.

The protein resides in the cytoplasm. An accessory protein needed during the final step in the assembly of 30S ribosomal subunit, possibly for assembly of the head region. Essential for efficient processing of 16S rRNA. May be needed both before and after RbfA during the maturation of 16S rRNA. It has affinity for free ribosomal 30S subunits but not for 70S ribosomes. The sequence is that of Ribosome maturation factor RimM from Bartonella bacilliformis (strain ATCC 35685 / KC583 / Herrer 020/F12,63).